Here is a 787-residue protein sequence, read N- to C-terminus: Phenylalanine--tRNA ligase beta subunit (787 aa).

One can recognise a tRNA-binding domain in the interval 39-149; it reads APAFSGVVVA…EDAPVGTNIR (111 aa). The region spanning 400–475 is the B5 domain; that stretch reads PEAKQVGLRL…RVYGYENIPD (76 aa). Mg(2+) is bound by residues D453, D459, E462, and E463. The FDX-ACB domain maps to 694-786; that stretch reads SKFQPVRRDL…VATEAGARLR (93 aa).

Belongs to the phenylalanyl-tRNA synthetase beta subunit family. Type 1 subfamily. As to quaternary structure, tetramer of two alpha and two beta subunits. The cofactor is Mg(2+).

It localises to the cytoplasm. The catalysed reaction is tRNA(Phe) + L-phenylalanine + ATP = L-phenylalanyl-tRNA(Phe) + AMP + diphosphate + H(+). This is Phenylalanine--tRNA ligase beta subunit from Neisseria gonorrhoeae (strain ATCC 700825 / FA 1090).